The chain runs to 327 residues: MADPIRVAVTGAAGQIAYSLLVRLASGQLFGKDRKVELKLLEIPQAMGPLEGVMMELQDCAFPTLAKVEAFDNPEQAFDGINWCLMVGSRPRGPGMERSDLIKINGPIFVNQGKALNRAAQDVRAVVVGNPCNTNCMIAAHNSDVPHERFSAMMRLDQNRAKYLLASKAGAQVIDVTNVVIWGNHSNNQVPDFEFAKIGGKPVPEVIADAAWLENAFMPTVQNRGAAVIKARGASSAASAANAALDHVRSLITPTPAGDTFCAAVMANGAYGVDAGLIAGMPLTSTGHGDWSIVEGVPMSPFIKGKFDAVLDELRREREMVKDLLPG.

Residue 11–17 participates in NAD(+) binding; that stretch reads GAAGQIA. Arg92 and Arg98 together coordinate substrate. NAD(+)-binding positions include Asn105, Gln112, and 128-130; that span reads VGN. The substrate site is built by Asn130 and Arg160. His185 functions as the Proton acceptor in the catalytic mechanism.

The protein belongs to the LDH/MDH superfamily. MDH type 2 family.

It catalyses the reaction (S)-malate + NAD(+) = oxaloacetate + NADH + H(+). Its function is as follows. Catalyzes the reversible oxidation of malate to oxaloacetate. In Magnetococcus marinus (strain ATCC BAA-1437 / JCM 17883 / MC-1), this protein is Malate dehydrogenase.